The sequence spans 404 residues: Cysteine desulfurase IscS (404 aa).

Pyridoxal 5'-phosphate-binding positions include 75-76 (AT), Asn155, Gln183, and 203-205 (SGH). Position 206 is an N6-(pyridoxal phosphate)lysine (Lys206). Thr243 lines the pyridoxal 5'-phosphate pocket. Cys328 acts as the Cysteine persulfide intermediate in catalysis. Cys328 contacts [2Fe-2S] cluster.

Belongs to the class-V pyridoxal-phosphate-dependent aminotransferase family. NifS/IscS subfamily. As to quaternary structure, homodimer. Forms a heterotetramer with IscU, interacts with other sulfur acceptors. Pyridoxal 5'-phosphate serves as cofactor.

Its subcellular location is the cytoplasm. It carries out the reaction (sulfur carrier)-H + L-cysteine = (sulfur carrier)-SH + L-alanine. Its pathway is cofactor biosynthesis; iron-sulfur cluster biosynthesis. Functionally, master enzyme that delivers sulfur to a number of partners involved in Fe-S cluster assembly, tRNA modification or cofactor biosynthesis. Catalyzes the removal of elemental sulfur atoms from cysteine to produce alanine. Functions as a sulfur delivery protein for Fe-S cluster synthesis onto IscU, an Fe-S scaffold assembly protein, as well as other S acceptor proteins. The polypeptide is Cysteine desulfurase IscS (Shewanella sp. (strain ANA-3)).